The following is a 102-amino-acid chain: Small ribosomal subunit protein uS10 (102 aa).

It belongs to the universal ribosomal protein uS10 family. As to quaternary structure, part of the 30S ribosomal subunit.

Involved in the binding of tRNA to the ribosomes. In Rhodospirillum centenum (strain ATCC 51521 / SW), this protein is Small ribosomal subunit protein uS10.